An 83-amino-acid polypeptide reads, in one-letter code: Cytochrome b559 subunit alpha (83 aa).

Residues 21 to 35 traverse the membrane as a helical segment; that stretch reads VIHSITIPSLFIAGW. Histidine 23 is a binding site for heme.

This sequence belongs to the PsbE/PsbF family. Heterodimer of an alpha subunit and a beta subunit. PSII is composed of 1 copy each of membrane proteins PsbA, PsbB, PsbC, PsbD, PsbE, PsbF, PsbH, PsbI, PsbJ, PsbK, PsbL, PsbM, PsbT, PsbX, PsbY, PsbZ, Psb30/Ycf12, at least 3 peripheral proteins of the oxygen-evolving complex and a large number of cofactors. It forms dimeric complexes. The cofactor is heme b.

It is found in the plastid. The protein localises to the chloroplast thylakoid membrane. Functionally, this b-type cytochrome is tightly associated with the reaction center of photosystem II (PSII). PSII is a light-driven water:plastoquinone oxidoreductase that uses light energy to abstract electrons from H(2)O, generating O(2) and a proton gradient subsequently used for ATP formation. It consists of a core antenna complex that captures photons, and an electron transfer chain that converts photonic excitation into a charge separation. The chain is Cytochrome b559 subunit alpha from Liriodendron tulipifera (Tuliptree).